Reading from the N-terminus, the 32-residue chain is Ranatuerin-2Lb (32 aa).

Cysteines 27 and 32 form a disulfide.

Expressed by the skin glands.

The protein localises to the secreted. Its function is as follows. Antibacterial activity against Gram-positive bacterium S.aureus and Gram-negative bacterium E.coli. Has activity against C.albicans. This chain is Ranatuerin-2Lb, found in Rana luteiventris (Columbia spotted frog).